A 171-amino-acid chain; its full sequence is uncharacterized protein (171 aa).

One can recognise an HTH marR-type domain in the interval 33–166 (AISIATNLYR…LTGLLRKVAD (134 aa)). Residues 80–103 (TRKIAELSGISTATASNVIKTLEK) constitute a DNA-binding region (H-T-H motif).

This is an uncharacterized protein from Bacillus subtilis (strain 168).